The sequence spans 502 residues: Galactose/methyl galactoside import ATP-binding protein MglA (502 aa).

ABC transporter domains follow at residues 10-245 (LEMT…VGRE) and 255-502 (NTPK…SRYL). An ATP-binding site is contributed by 42-49 (GENGAGKS).

The protein belongs to the ABC transporter superfamily. Galactose/methyl galactoside importer (TC 3.A.1.2.3) family. In terms of assembly, the complex is composed of one ATP-binding protein (MglA), two transmembrane proteins (MglC) and a solute-binding protein (MglB).

It localises to the cell inner membrane. It catalyses the reaction D-galactose(out) + ATP + H2O = D-galactose(in) + ADP + phosphate + H(+). It carries out the reaction methyl beta-D-galactoside(out) + ATP + H2O = methyl beta-D-galactoside(in) + ADP + phosphate + H(+). Functionally, part of the ABC transporter complex MglABC involved in galactose/methyl galactoside import. Responsible for energy coupling to the transport system. The polypeptide is Galactose/methyl galactoside import ATP-binding protein MglA (Vibrio vulnificus (strain CMCP6)).